The sequence spans 264 residues: 3-methyl-2-oxobutanoate hydroxymethyltransferase (264 aa).

Residues Asp-45 and Asp-84 each coordinate Mg(2+). 3-methyl-2-oxobutanoate is bound by residues 45 to 46 (DS), Asp-84, and Lys-112. Glu-114 contacts Mg(2+). The active-site Proton acceptor is the Glu-181.

The protein belongs to the PanB family. As to quaternary structure, homodecamer; pentamer of dimers. Mg(2+) serves as cofactor.

It localises to the cytoplasm. The catalysed reaction is 3-methyl-2-oxobutanoate + (6R)-5,10-methylene-5,6,7,8-tetrahydrofolate + H2O = 2-dehydropantoate + (6S)-5,6,7,8-tetrahydrofolate. Its pathway is cofactor biosynthesis; (R)-pantothenate biosynthesis; (R)-pantoate from 3-methyl-2-oxobutanoate: step 1/2. Its function is as follows. Catalyzes the reversible reaction in which hydroxymethyl group from 5,10-methylenetetrahydrofolate is transferred onto alpha-ketoisovalerate to form ketopantoate. This is 3-methyl-2-oxobutanoate hydroxymethyltransferase from Shewanella sp. (strain ANA-3).